We begin with the raw amino-acid sequence, 335 residues long: MAQVRALHKIMALFSANSIGAMNNSDTRIAGCFLTGIPGLEQLHIWLSIPFCIMYITALEGNGILICVILSQAILHEPMYIFLSMLASADVLLSTTTMPKALANLWLGYSLISFDGCLTQMFFIHFLFIHSAVLLAMAFDRYVAICSPLRYVTILTSKVIGKIVTAALSHSFIIMFPSIFLLEHLHYCQINIIAHTFCEHMGIAHLSCSDISINVWYGLAAALLSTGLDIMLITVSYIHILQAVFRLLSQDARSKALSTCGSHICVILLFYVPALFSVFAYRFGGRSVPCYVHILLASLYVVIPPMLNPVIYGVRTKPILEGAKQMFSNLAKGSK.

Residues 1 to 45 (MAQVRALHKIMALFSANSIGAMNNSDTRIAGCFLTGIPGLEQLHI) lie on the Extracellular side of the membrane. N23 is a glycosylation site (N-linked (GlcNAc...) asparagine). A helical membrane pass occupies residues 46–66 (WLSIPFCIMYITALEGNGILI). Topologically, residues 67-74 (CVILSQAI) are cytoplasmic. A helical transmembrane segment spans residues 75–95 (LHEPMYIFLSMLASADVLLST). Over 96–119 (TTMPKALANLWLGYSLISFDGCLT) the chain is Extracellular. C117 and C208 are disulfide-bonded. A helical membrane pass occupies residues 120 to 139 (QMFFIHFLFIHSAVLLAMAF). At 140–158 (DRYVAICSPLRYVTILTSK) the chain is on the cytoplasmic side. A helical transmembrane segment spans residues 159-179 (VIGKIVTAALSHSFIIMFPSI). Residues 180-215 (FLLEHLHYCQINIIAHTFCEHMGIAHLSCSDISINV) lie on the Extracellular side of the membrane. Residues 216–236 (WYGLAAALLSTGLDIMLITVS) traverse the membrane as a helical segment. The Cytoplasmic portion of the chain corresponds to 237-256 (YIHILQAVFRLLSQDARSKA). A helical transmembrane segment spans residues 257–277 (LSTCGSHICVILLFYVPALFS). Residues 278-293 (VFAYRFGGRSVPCYVH) are Extracellular-facing. A helical transmembrane segment spans residues 294-314 (ILLASLYVVIPPMLNPVIYGV). Over 315–335 (RTKPILEGAKQMFSNLAKGSK) the chain is Cytoplasmic.

It belongs to the G-protein coupled receptor 1 family.

It localises to the cell membrane. In terms of biological role, odorant receptor. This Homo sapiens (Human) protein is Olfactory receptor 52B6 (OR52B6).